The primary structure comprises 287 residues: RxLR effector protein Avr4 (287 aa).

Positions 1-24 (MRSLHILLVFTASLLASLTESAKA) are cleaved as a signal peptide. Residues 42–55 (RFLRAQTDEKNEER) carry the RxLR-dEER motif. Positions 115-138 (KYERMQWQKLKEGETLTFMRLGDR) are W1 motif. Residues 148-171 (QLLRWVAQKKPVESVYDDLQVAGF) form a W2 motif region. Positions 221-244 (LFEKWAMEGTHIKSVITTLKLNGK) are W3 motif. A y motif region spans residues 246-267 (ASEMANNENFPALLKYVKLYLD).

It belongs to the RxLR effector family.

The protein localises to the secreted. It is found in the host cytoplasm. It localises to the host nucleus. Its subcellular location is the host nucleolus. The protein resides in the host cytoskeleton. In terms of biological role, secreted effector that acts as an elicitor of hypersensitive response (HR) specifically on plants carrying defense protein R4, through its interaction with this protein. The polypeptide is RxLR effector protein Avr4 (Phytophthora infestans (strain T30-4) (Potato late blight agent)).